Consider the following 145-residue polypeptide: Transcription antitermination protein NusB (145 aa).

It belongs to the NusB family.

In terms of biological role, involved in transcription antitermination. Required for transcription of ribosomal RNA (rRNA) genes. Binds specifically to the boxA antiterminator sequence of the ribosomal RNA (rrn) operons. The chain is Transcription antitermination protein NusB from Burkholderia ambifaria (strain MC40-6).